The primary structure comprises 145 residues: 3-hydroxyacyl-[acyl-carrier-protein] dehydratase FabZ (145 aa).

Histidine 49 is a catalytic residue.

This sequence belongs to the thioester dehydratase family. FabZ subfamily.

It localises to the cytoplasm. The enzyme catalyses a (3R)-hydroxyacyl-[ACP] = a (2E)-enoyl-[ACP] + H2O. Involved in unsaturated fatty acids biosynthesis. Catalyzes the dehydration of short chain beta-hydroxyacyl-ACPs and long chain saturated and unsaturated beta-hydroxyacyl-ACPs. The protein is 3-hydroxyacyl-[acyl-carrier-protein] dehydratase FabZ of Rickettsia felis (strain ATCC VR-1525 / URRWXCal2) (Rickettsia azadi).